The following is a 652-amino-acid chain: DNA ligase (652 aa).

NAD(+)-binding positions include 29–33, 78–79, and E107; these read DSQYD and SL. The active-site N6-AMP-lysine intermediate is the K109. Residues R130, E164, K278, and K302 each contribute to the NAD(+) site. Zn(2+) contacts are provided by C395, C398, C413, and C418. In terms of domain architecture, BRCT spans 577–652; that stretch reads STDAQLSGLT…IQDEDWLLNL (76 aa).

This sequence belongs to the NAD-dependent DNA ligase family. LigA subfamily. It depends on Mg(2+) as a cofactor. Requires Mn(2+) as cofactor.

It catalyses the reaction NAD(+) + (deoxyribonucleotide)n-3'-hydroxyl + 5'-phospho-(deoxyribonucleotide)m = (deoxyribonucleotide)n+m + AMP + beta-nicotinamide D-nucleotide.. DNA ligase that catalyzes the formation of phosphodiester linkages between 5'-phosphoryl and 3'-hydroxyl groups in double-stranded DNA using NAD as a coenzyme and as the energy source for the reaction. It is essential for DNA replication and repair of damaged DNA. The polypeptide is DNA ligase (Streptococcus agalactiae serotype V (strain ATCC BAA-611 / 2603 V/R)).